The sequence spans 70 residues: Large ribosomal subunit protein bL31 (70 aa).

Zn(2+) contacts are provided by Cys-16, Cys-18, Cys-38, and Cys-41.

The protein belongs to the bacterial ribosomal protein bL31 family. Type A subfamily. As to quaternary structure, part of the 50S ribosomal subunit. Zn(2+) is required as a cofactor.

Binds the 23S rRNA. The sequence is that of Large ribosomal subunit protein bL31 from Bifidobacterium longum (strain DJO10A).